The following is a 134-amino-acid chain: Profilin-3 (134 aa).

C13 and C118 form a disulfide bridge. Positions 84–100 match the Involved in PIP2 interaction motif; it reads AVIRGKKGSGGITIKKT. Residue T114 is modified to Phosphothreonine.

This sequence belongs to the profilin family. As to quaternary structure, occurs in many kinds of cells as a complex with monomeric actin in a 1:1 ratio. In terms of processing, phosphorylated by MAP kinases.

The protein localises to the cytoplasm. It is found in the cytoskeleton. In terms of biological role, binds to actin and affects the structure of the cytoskeleton. At high concentrations, profilin prevents the polymerization of actin, whereas it enhances it at low concentrations. This chain is Profilin-3, found in Olea europaea (Common olive).